The primary structure comprises 548 residues: Ankyrin repeat domain-containing protein SOWAHA (548 aa).

The signal sequence occupies residues 1–19; sequence MALAAAAAAAAAAAGVSQA. A disordered region spans residues 114-212; that stretch reads EDNCAPGAPH…PPTAQVPPQK (99 aa). Positions 136 to 153 are enriched in polar residues; it reads SAPSELQHTPETLPSEVT. The segment covering 198–212 has biased composition (pro residues); it reads GPEPAPPTAQVPPQK. S258 is modified (phosphoserine). ANK repeat units follow at residues 344-373 and 383-413; these read SGFT…RGGA and GGYT…QVHV. Residues 512–548 are disordered; the sequence is PRKKTKIRGGLPSFTEISHRSTPGPLAGLVPSLPPPT.

It belongs to the SOWAH family.

The chain is Ankyrin repeat domain-containing protein SOWAHA (Sowaha) from Mus musculus (Mouse).